A 549-amino-acid chain; its full sequence is Glucose-6-phosphate isomerase (549 aa).

An N6-acetyllysine mark is found at Lys80, Lys228, and Lys234. Glu355 (proton donor) is an active-site residue. Residues His386 and Lys514 contribute to the active site.

Belongs to the GPI family.

It is found in the cytoplasm. The catalysed reaction is alpha-D-glucose 6-phosphate = beta-D-fructose 6-phosphate. Its pathway is carbohydrate biosynthesis; gluconeogenesis. It functions in the pathway carbohydrate degradation; glycolysis; D-glyceraldehyde 3-phosphate and glycerone phosphate from D-glucose: step 2/4. Catalyzes the reversible isomerization of glucose-6-phosphate to fructose-6-phosphate. This chain is Glucose-6-phosphate isomerase, found in Escherichia coli O127:H6 (strain E2348/69 / EPEC).